Consider the following 99-residue polypeptide: Protein translation factor SUI1 homolog (99 aa).

It belongs to the SUI1 family.

In Pyrococcus horikoshii (strain ATCC 700860 / DSM 12428 / JCM 9974 / NBRC 100139 / OT-3), this protein is Protein translation factor SUI1 homolog.